The chain runs to 210 residues: dITP/XTP pyrophosphatase (210 aa).

Residue 13–18 (THNPGK) participates in substrate binding. Positions 45 and 74 each coordinate Mg(2+). Catalysis depends on Asp74, which acts as the Proton acceptor. Residues Ser75, 160–163 (FGYD), Lys183, and 195–196 (HR) each bind substrate.

This sequence belongs to the HAM1 NTPase family. Homodimer. Mg(2+) is required as a cofactor.

The enzyme catalyses XTP + H2O = XMP + diphosphate + H(+). It catalyses the reaction dITP + H2O = dIMP + diphosphate + H(+). It carries out the reaction ITP + H2O = IMP + diphosphate + H(+). Functionally, pyrophosphatase that catalyzes the hydrolysis of nucleoside triphosphates to their monophosphate derivatives, with a high preference for the non-canonical purine nucleotides XTP (xanthosine triphosphate), dITP (deoxyinosine triphosphate) and ITP. Seems to function as a house-cleaning enzyme that removes non-canonical purine nucleotides from the nucleotide pool, thus preventing their incorporation into DNA/RNA and avoiding chromosomal lesions. This is dITP/XTP pyrophosphatase from Rhodopseudomonas palustris (strain ATCC BAA-98 / CGA009).